Consider the following 441-residue polypeptide: COBRA-like protein 2 (441 aa).

The first 28 residues, 1–28 (MNILFSRFSFLLLFLCSWTSFTFTTTEA), serve as a signal peptide directing secretion. N-linked (GlcNAc...) asparagine glycosylation is found at N37, N162, N170, N209, N234, N249, N314, N329, and N348. A lipid anchor (GPI-anchor amidated asparagine) is attached at N417. The propeptide at 418 to 441 (ASPNIATSPFVILLITFLSVLILM) is removed in mature form.

This sequence belongs to the COBRA family. Expressed in roots, stems, leaves, flowers and siliques.

The protein resides in the cell membrane. The polypeptide is COBRA-like protein 2 (COBL2) (Arabidopsis thaliana (Mouse-ear cress)).